The following is a 492-amino-acid chain: Protein nucleotidyltransferase YdiU (492 aa).

ATP contacts are provided by G101, G103, R104, K124, D136, G137, R187, and R194. The Proton acceptor role is filled by D268. Mg(2+) is bound by residues N269 and D278. D278 provides a ligand contact to ATP.

It belongs to the SELO family. The cofactor is Mg(2+). Mn(2+) serves as cofactor.

It catalyses the reaction L-seryl-[protein] + ATP = 3-O-(5'-adenylyl)-L-seryl-[protein] + diphosphate. The enzyme catalyses L-threonyl-[protein] + ATP = 3-O-(5'-adenylyl)-L-threonyl-[protein] + diphosphate. The catalysed reaction is L-tyrosyl-[protein] + ATP = O-(5'-adenylyl)-L-tyrosyl-[protein] + diphosphate. It carries out the reaction L-histidyl-[protein] + UTP = N(tele)-(5'-uridylyl)-L-histidyl-[protein] + diphosphate. It catalyses the reaction L-seryl-[protein] + UTP = O-(5'-uridylyl)-L-seryl-[protein] + diphosphate. The enzyme catalyses L-tyrosyl-[protein] + UTP = O-(5'-uridylyl)-L-tyrosyl-[protein] + diphosphate. In terms of biological role, nucleotidyltransferase involved in the post-translational modification of proteins. It can catalyze the addition of adenosine monophosphate (AMP) or uridine monophosphate (UMP) to a protein, resulting in modifications known as AMPylation and UMPylation. The polypeptide is Protein nucleotidyltransferase YdiU (Corynebacterium efficiens (strain DSM 44549 / YS-314 / AJ 12310 / JCM 11189 / NBRC 100395)).